Here is a 5251-residue protein sequence, read N- to C-terminus: Dynein heavy chain-like protein 2 (5251 aa).

Kelch repeat units lie at residues 37-87, 95-143, 266-317, 318-367, and 372-421; these read GLFL…CYHN, YVII…LQNG, SLIL…IHGN, NLFI…LVES, and IIFI…QNNE. The segment at 140-188 is disordered; sequence LQNGINGTNEKGYISQTDDENCSDNKYGENQDYGSNDSDSKDGEDIDKD. Residues 686 to 732 form a disordered region; that stretch reads NNIEQRNNNNDNNDNNNNDNNNNNNNDNNNNNNNNNNNNNNNNDNLN. The span at 692–730 shows a compositional bias: low complexity; that stretch reads NNNNDNNDNNNNDNNNNNNNDNNNNNNNNNNNNNNNNDN. 2 coiled-coil regions span residues 1155–1225 and 1544–1610; these read DNII…KKIK and KLNN…KLIS. Residues 1554–1598 form a disordered region; that stretch reads EKNKNANENSNEIETNKYNKKEELTNNRDGDGDDDDNIKNDKDEK. Residues 1567–1583 are compositionally biased toward basic and acidic residues; sequence ETNKYNKKEELTNNRDG. The stretch at 1639-1685 is one Kelch 6 repeat; the sequence is HIKYTLKYYITNLFRLKDLFNNEKEKWIDENYLAQVFILCNTIFFVN. Residues 1802–1825 are disordered; it reads HQEGKQEYNNKNNDNDNNNNNNNN. The segment covering 1810–1825 has biased composition (low complexity); the sequence is NNKNNDNDNNNNNNNN. Position 1895–1902 (1895–1902) interacts with ATP; the sequence is GPAGTGKT. A coiled-coil region spans residues 2136–2188; that stretch reads NDINENKKEKDNIEELKSDNVKEEKKTKKKHLEDNNNNKKKELFNLNNIEKEL. The disordered stretch occupies residues 2152 to 2171; sequence KSDNVKEEKKTKKKHLEDNN. An ATP-binding site is contributed by 2224 to 2231; it reads GEAGCGKT. One copy of the Kelch 7 repeat lies at 2447-2494; the sequence is VIWCFGGFLGEKDNVNYKKSFDKYWKNTFKSIKVNRKISVFDFYVENN. Residues 2546 to 2553 and 2890 to 2897 each bind ATP; these read GKTGVGKT and GIGGCGKT. Low complexity-rich tracts occupy residues 3138–3154 and 3652–3671; these read DNNN…DGNN and DQNF…NSTN. Disordered regions lie at residues 3138–3163, 3652–3686, 4042–4250, 4280–4299, 4773–4824, and 4910–4948; these read DNNN…EGND, DQNF…NHNN, EDND…EENV, NGKI…DFEN, MDFH…ENEE, and KIIK…HSGS. Residues 4059-4086 are compositionally biased toward acidic residues; it reads KMEDEEKMEEEKVDEEKMEEEKVDEEKM. Residues 4087–4247 are compositionally biased toward basic and acidic residues; the sequence is EDEKVEEKME…EKGEEQKAEE (161 aa). Composition is skewed to acidic residues over residues 4289–4299 and 4807–4823; these read DDLEEEEDFEN and DDDD…EENE. The segment covering 4912 to 4937 has biased composition (basic and acidic residues); sequence IKKEKPGDNKDNKYTHDQKKETIHKE.

The protein belongs to the dynein heavy chain family. As to quaternary structure, consists of at least two heavy chains and a number of intermediate and light chains.

The protein localises to the cytoplasm. Its subcellular location is the cytoskeleton. Its function is as follows. Acts as a motor for the intracellular retrograde motility of vesicles and organelles along microtubules. Dynein has ATPase activity; the force-producing power stroke is thought to occur on release of ADP. In Plasmodium falciparum (isolate 3D7), this protein is Dynein heavy chain-like protein 2.